The sequence spans 641 residues: MINNKMKTLSDKYPTKMAVTSEIINLKAILNLPKPTEAFMSDLHGEYDAFQHLIRTGAGNLRQKINELFSGEMTPETMQAFAFLVYYPTERLALKHKALSENELNQWYLTTFKRMIDLLKFVSTKYTRSKVRKAMAPDFVYITEELMYGDVANVDKKRYFQEITATIIELGQADALIIATSHTIQRLVVDQWHIIGDIYDRGPHPDLIVDQLTQLPAVDVQWGNHDILWFGAASGSELCLLNLLRICARYNNLAIIEETYGIALTDLVRFAAQHYQANSAFMPVEDPNQGPLTHAEKLKISQVQQALAIMQFKLELTVIKRHPEFNMDHRLLLSQVDFKRRILHLNGQEYPLKNTCFQLVDPENPEALTAEESQIIADLLAAFTRCQKLRKHLTFLIDHGSMYRIYNQNLLFHGCLPVDAQGHFLTLTLANQNYAGKQLLDFFDQQIRSSFNHPLHQANLSTDLLWYLWTGPLSPLFGKNAMTTFERYFCPDPETHVETKNAYYSLRHDADFIQQLLSEFNLSPETGHILNGHTPVKKGHDPIMANRQMIVIDGGFSKAYHHTTGIGGFTLLYNSYGMQLVTHQPFTTKADAIANMKDIISTRRVIDQVSQRQRVSQTNIGAAIKTEIEQLQTLLTIQPDH.

It belongs to the FBPase class 3 family. Mn(2+) is required as a cofactor.

It carries out the reaction beta-D-fructose 1,6-bisphosphate + H2O = beta-D-fructose 6-phosphate + phosphate. Its pathway is carbohydrate biosynthesis; gluconeogenesis. The polypeptide is Fructose-1,6-bisphosphatase class 3 (Latilactobacillus sakei subsp. sakei (strain 23K) (Lactobacillus sakei subsp. sakei)).